Consider the following 247-residue polypeptide: uncharacterized protein (247 aa).

One can recognise an N-acetyltransferase domain in the interval Arg-102–Arg-247.

Belongs to the acetyltransferase family.

This is an uncharacterized protein from Bacillus subtilis (strain 168).